A 380-amino-acid polypeptide reads, in one-letter code: Zinc metalloproteinase-like protein nas-21 (380 aa).

The first 24 residues, 1 to 24, serve as a signal peptide directing secretion; that stretch reads MNYFITFFFMHIAVLNFYFRFSNG. In terms of domain architecture, Peptidase M12A spans 46–234; sequence QALRMDNEPR…LMINEYYQCS (189 aa). N87 is a glycosylation site (N-linked (GlcNAc...) asparagine). 2 disulfides stabilise this stretch: C90–C233 and C110–C130. Residue E138 is part of the active site. 4 N-linked (GlcNAc...) asparagine glycosylation sites follow: N253, N269, N283, and N304.

The protein localises to the secreted. In terms of biological role, may lack metalloprotease activity. This is Zinc metalloproteinase-like protein nas-21 (nas-21) from Caenorhabditis elegans.